The following is a 60-amino-acid chain: UPF0434 protein KPK_3615 (60 aa).

This sequence belongs to the UPF0434 family.

The sequence is that of UPF0434 protein KPK_3615 from Klebsiella pneumoniae (strain 342).